A 184-amino-acid polypeptide reads, in one-letter code: Peptidoglycan-recognition protein SC2 (184 aa).

An N-terminal signal peptide occupies residues 1–20; that stretch reads MANKALILLAVLFCAQAVLG. Residues 45 to 169 form the N-acetylmuramoyl-L-alanine amidase domain; sequence SYAVIHHTAG…RQVGSTECPG (125 aa). Zn(2+) is bound at residue His-50. Cys-57 and Cys-63 are oxidised to a cystine. Residues His-159 and Cys-167 each contribute to the Zn(2+) site.

This sequence belongs to the N-acetylmuramoyl-L-alanine amidase 2 family. Requires Zn(2+) as cofactor.

The protein resides in the secreted. It carries out the reaction Hydrolyzes the link between N-acetylmuramoyl residues and L-amino acid residues in certain cell-wall glycopeptides.. In terms of biological role, N-acetylmuramyl-L-alanine amidase involved in innate immunity by degrading bacterial peptidoglycans (PGN). Probably plays a scavenger role by digesting biologically active PGN into biologically inactive fragments. Has no direct bacteriolytic activity. The polypeptide is Peptidoglycan-recognition protein SC2 (PGRP-SC2) (Drosophila simulans (Fruit fly)).